We begin with the raw amino-acid sequence, 171 residues long: Putative phosphoesterase BH1439 (171 aa).

The active-site Proton donor is H34. Short sequence motifs (HXTX) lie at residues 34 to 37 (HVTL) and 115 to 118 (HLTI). Residue H115 is the Proton acceptor of the active site.

This sequence belongs to the 2H phosphoesterase superfamily. YjcG family.

The polypeptide is Putative phosphoesterase BH1439 (Halalkalibacterium halodurans (strain ATCC BAA-125 / DSM 18197 / FERM 7344 / JCM 9153 / C-125) (Bacillus halodurans)).